Consider the following 906-residue polypeptide: Aconitate hydratase A (906 aa).

The propeptide occupies 1-2; it reads MS. 3 residues coordinate [4Fe-4S] cluster: Cys-441, Cys-507, and Cys-510.

This sequence belongs to the aconitase/IPM isomerase family. In terms of assembly, monomer. Requires [4Fe-4S] cluster as cofactor.

The catalysed reaction is citrate = D-threo-isocitrate. It carries out the reaction (2S,3R)-3-hydroxybutane-1,2,3-tricarboxylate = 2-methyl-cis-aconitate + H2O. It functions in the pathway carbohydrate metabolism; tricarboxylic acid cycle; isocitrate from oxaloacetate: step 2/2. It participates in organic acid metabolism; propanoate degradation. In terms of biological role, involved in the catabolism of short chain fatty acids (SCFA) via the tricarboxylic acid (TCA)(acetyl degradation route) and probably the 2-methylcitrate cycle I (propionate degradation route). Catalyzes the reversible isomerization of citrate to isocitrate via cis-aconitate. Could catalyze the hydration of 2-methyl-cis-aconitate to yield (2R,3S)-2-methylisocitrate. The apo form of AcnA functions as a RNA-binding regulatory protein. This is Aconitate hydratase A (acn) from Deinococcus radiodurans (strain ATCC 13939 / DSM 20539 / JCM 16871 / CCUG 27074 / LMG 4051 / NBRC 15346 / NCIMB 9279 / VKM B-1422 / R1).